The sequence spans 620 residues: KIF-binding protein (620 aa).

2 coiled-coil regions span residues 30–64 (YKSKYEAIELLVKELKKEINENEKELNQQQQQDIL) and 133–169 (LIKSENLINQTIEKQQEQEQEQEQQFKDKLESLQLQN).

This sequence belongs to the KIF-binding protein family.

The protein localises to the cytoplasm. The protein resides in the cytoskeleton. Its function is as follows. Activator of KIF1B plus-end-directed microtubule motor activity. Required for organization of axonal microtubules, and axonal outgrowth and maintenance during peripheral and central nervous system development. This is KIF-binding protein (kifbp) from Dictyostelium discoideum (Social amoeba).